The chain runs to 208 residues: Ribosomal RNA large subunit methyltransferase E (208 aa).

S-adenosyl-L-methionine is bound by residues G62, W64, D82, D98, and D123. The active-site Proton acceptor is K163.

The protein belongs to the class I-like SAM-binding methyltransferase superfamily. RNA methyltransferase RlmE family.

The protein resides in the cytoplasm. The enzyme catalyses uridine(2552) in 23S rRNA + S-adenosyl-L-methionine = 2'-O-methyluridine(2552) in 23S rRNA + S-adenosyl-L-homocysteine + H(+). In terms of biological role, specifically methylates the uridine in position 2552 of 23S rRNA at the 2'-O position of the ribose in the fully assembled 50S ribosomal subunit. The sequence is that of Ribosomal RNA large subunit methyltransferase E from Actinobacillus succinogenes (strain ATCC 55618 / DSM 22257 / CCUG 43843 / 130Z).